The sequence spans 664 residues: Putative carboxypeptidase suro-1 (664 aa).

A signal peptide spans 1–23 (MRYLCKSILLAVHTILLVGSVCC). The propeptide at 24–110 (STDVHNTDDK…MSVPDVEKLI (87 aa)) is activation peptide. The region spanning 160 to 473 (DYASYADMVK…EGFREVVDAV (314 aa)) is the Peptidase M14 domain. Zn(2+)-binding residues include H219 and E222. Substrate-binding positions include 219–222 (HARE), R281, and 306–307 (NR). Residue H361 coordinates Zn(2+). Residue 362 to 363 (SY) participates in substrate binding. E437 serves as the catalytic Proton donor/acceptor. The span at 512-543 (ASQAAGSTTRSTTTLKTSTTSVSTTSEATSPS) shows a compositional bias: low complexity. A disordered region spans residues 512-590 (ASQAAGSTTR…TTTTEEEDVT (79 aa)). Residues 564–573 (PTPPMAPPIM) are compositionally biased toward pro residues. Low complexity predominate over residues 574–583 (SPSTEFSTTT). Positions 621-657 (CRDMRYSCGFWLKNNKQVCEEQQSFMRAQCAYTCKFC) constitute a ShKT domain. Disulfide bonds link C621/C657, C628/C650, and C639/C654.

The protein belongs to the peptidase M14 family. It depends on Zn(2+) as a cofactor. Localizes in stripes along the cuticle.

The protein localises to the cytoplasmic vesicle. It localises to the secreted. Functionally, may play a role in processing or organization of cuticle collagen proteins, including rol-6 and col-19. The protein is Putative carboxypeptidase suro-1 of Caenorhabditis elegans.